Reading from the N-terminus, the 198-residue chain is Recombination protein RecR (198 aa).

A C4-type zinc finger spans residues 57-72 (CSVCGHITDRDPCYIC). The Toprim domain maps to 80 to 175 (SVVCVVQEPK…KVTRIAHGLP (96 aa)).

The protein belongs to the RecR family.

Functionally, may play a role in DNA repair. It seems to be involved in an RecBC-independent recombinational process of DNA repair. It may act with RecF and RecO. The chain is Recombination protein RecR from Bacillus anthracis (strain A0248).